The sequence spans 119 residues: Beta-2-microglobulin (119 aa).

Positions 1–20 (MARFVVVPLLVLLSLFGLEA) are cleaved as a signal peptide. The Ig-like C1-type domain maps to 25–114 (PKIQVYSRYP…VTFSTPKTVK (90 aa)). Cys45 and Cys100 form a disulfide bridge.

It belongs to the beta-2-microglobulin family. Heterodimer of an alpha chain and a beta chain. Beta-2-microglobulin is the beta-chain of major histocompatibility complex class I molecules.

It localises to the secreted. Functionally, component of the class I major histocompatibility complex (MHC). Involved in the presentation of peptide antigens to the immune system. The polypeptide is Beta-2-microglobulin (B2M) (Saguinus bicolor bicolor (Pied bare-faced tamarin)).